We begin with the raw amino-acid sequence, 1196 residues long: DNA excision repair protein ERCC-5 homolog (1196 aa).

The tract at residues methionine 1–glycine 78 is N-domain. Aspartate 30 provides a ligand contact to Mg(2+). The interval isoleucine 31–phenylalanine 67 is DNA-binding; may bind to the undamaged single-strand DNA of the DNA repair bubble. A Mg(2+)-binding site is contributed by aspartate 77. The interval glutamate 79–valine 818 is spacer region. Disordered regions lie at residues proline 152–lysine 176, lysine 302–glutamine 321, glutamine 629–methionine 661, and alanine 722–serine 758. A compositionally biased stretch (acidic residues) spans glutamate 154–glutamate 168. Residues proline 311–glutamine 321 are compositionally biased toward polar residues. Residues alanine 722–glutamine 731 are compositionally biased toward polar residues. Over residues proline 734–aspartate 755 the composition is skewed to basic and acidic residues. An I-domain region spans residues alanine 819–phenylalanine 914. The Mg(2+) site is built by glutamate 822, glutamate 824, aspartate 843, and aspartate 845. A DNA-binding; may bind to the undamaged single-strand DNA of the DNA repair bubble region spans residues histidine 853–glutamine 869. The tract at residues arginine 881–glutamate 913 is DNA-binding; H2TH (helix-2turn-helix) motif which binds double-stranded DNA. Aspartate 894 provides a ligand contact to Mg(2+). The tract at residues threonine 945 to leucine 951 is DNA-binding; may bind double-stranded DNA. Residues cysteine 1075–lysine 1196 form a disordered region. The short motif at arginine 1079 to lysine 1095 is the Nuclear localization signal 1 element. Over residues serine 1119–serine 1130 the composition is skewed to low complexity. Positions lysine 1142–valine 1158 are enriched in polar residues. Residues phenylalanine 1179–lysine 1196 carry the Nuclear localization signal 2 motif.

This sequence belongs to the XPG/RAD2 endonuclease family. XPG subfamily. In terms of assembly, monomer. Homodimer. Mg(2+) is required as a cofactor.

The protein localises to the nucleus. The protein resides in the chromosome. Single-stranded structure-specific DNA endonuclease involved in DNA excision repair. Makes the 3'incision in DNA nucleotide excision repair (NER). Binds and bends DNA repair bubble substrate and breaks base stacking at the single-strand/double-strand DNA junction of the DNA bubble. Plays a role in base excision repair (BER) by promoting the binding of DNA glycosylase to its substrate and increasing DNA glycosylase catalytic activity that removes oxidized pyrimidines from DNA. Involved in transcription-coupled nucleotide excision repair (TCR) which allows RNA polymerase II-blocking lesions to be rapidly removed from the transcribed strand of active genes. Required for DNA replication fork maintenance and preservation of genomic stability. Involved in homologous recombination repair (HRR) induced by DNA replication stress. During HRR, binds to the replication fork with high specificity and stabilizes it. In Xenopus laevis (African clawed frog), this protein is DNA excision repair protein ERCC-5 homolog (ercc5).